The sequence spans 54 residues: Large ribosomal subunit protein bL33 (54 aa).

The protein belongs to the bacterial ribosomal protein bL33 family.

The polypeptide is Large ribosomal subunit protein bL33 (Chloroflexus aurantiacus (strain ATCC 29366 / DSM 635 / J-10-fl)).